The primary structure comprises 402 residues: tRNA pseudouridine synthase Pus10 (402 aa).

The THUMP domain occupies 37 to 159 (RLRGERLVEK…QIRVHVQINP (123 aa)). Residue D228 is the Nucleophile of the active site. Substrate is bound by residues Y296 and Y364.

It belongs to the pseudouridine synthase Pus10 family.

The enzyme catalyses uridine(54) in tRNA = pseudouridine(54) in tRNA. The catalysed reaction is uridine(55) in tRNA = pseudouridine(55) in tRNA. In terms of biological role, responsible for synthesis of pseudouridine from uracil-54 and uracil-55 in the psi GC loop of transfer RNAs. The chain is tRNA pseudouridine synthase Pus10 from Methanothermobacter marburgensis (strain ATCC BAA-927 / DSM 2133 / JCM 14651 / NBRC 100331 / OCM 82 / Marburg) (Methanobacterium thermoautotrophicum).